A 306-amino-acid chain; its full sequence is uncharacterized protein (306 aa).

Tyr-51 acts as the Proton donor in catalysis. Gly-197–Lys-207 serves as a coordination point for NADP(+).

The protein belongs to the aldo/keto reductase family. Aldo/keto reductase 2 subfamily.

This is an uncharacterized protein from Bacillus subtilis (strain 168).